A 250-amino-acid chain; its full sequence is Ribosome-inactivating protein luffin-B (250 aa).

Residue E160 is part of the active site.

Belongs to the ribosome-inactivating protein family. Type 1 RIP subfamily.

It catalyses the reaction Endohydrolysis of the N-glycosidic bond at one specific adenosine on the 28S rRNA.. In Luffa aegyptiaca (Sponge gourd), this protein is Ribosome-inactivating protein luffin-B.